Consider the following 877-residue polypeptide: DNA polymerase I (877 aa).

Positions 177 to 270 (TPAQFIDLKA…LEDLVYSGPD (94 aa)) constitute a 5'-3' exonuclease domain. Residues 302–465 (DFTIVDQISQ…TEPILLEKLS (164 aa)) form the 3'-5' exonuclease domain.

The protein belongs to the DNA polymerase type-A family. As to quaternary structure, single-chain monomer with multiple functions.

It catalyses the reaction DNA(n) + a 2'-deoxyribonucleoside 5'-triphosphate = DNA(n+1) + diphosphate. Functionally, in addition to polymerase activity, this DNA polymerase exhibits 3'-5' and 5'-3' exonuclease activity. The protein is DNA polymerase I (polA) of Streptococcus pneumoniae (strain ATCC BAA-255 / R6).